The sequence spans 513 residues: Sulfhydryl oxidase 1 (513 aa).

Positions 1–30 (MAAAAVARRVVLVLVLAAASLAAAPRGAAA) are cleaved as a signal peptide. Residues 31–174 (RSLGGREGPG…LLKWINNQMK (144 aa)) form the Thioredoxin domain. A glycan (N-linked (GlcNAc...) asparagine) is linked at asparagine 51. Catalysis depends on nucleophile residues cysteine 76 and cysteine 79. A disulfide bridge connects residues cysteine 76 and cysteine 79. Asparagine 193 and asparagine 266 each carry an N-linked (GlcNAc...) asparagine glycan. Residues cysteine 301 and cysteine 313 are joined by a disulfide bond. In terms of domain architecture, ERV/ALR sulfhydryl oxidase spans 304 to 406 (SKSETRGFSC…GDPLFPKVTW (103 aa)). FAD is bound by residues arginine 309, tryptophan 316, histidine 320, glutamate 350, histidine 354, 377–384 (WSTHNKVN), lysine 403, and tryptophan 406. Cysteine 348 and cysteine 351 are oxidised to a cystine. Cysteine 412 and cysteine 415 form a disulfide bridge.

The cofactor is FAD.

It is found in the secreted. It catalyses the reaction 2 R'C(R)SH + O2 = R'C(R)S-S(R)CR' + H2O2. Its function is as follows. Catalyzes the oxidation of sulfhydryl groups in peptide and protein thiols to disulfides with the reduction of oxygen to hydrogen peroxide. May contribute to disulfide bond formation in a variety of secreted proteins. The protein is Sulfhydryl oxidase 1 (QSOX1) of Oryza sativa subsp. japonica (Rice).